A 387-amino-acid polypeptide reads, in one-letter code: Dual-specificity RNA methyltransferase RlmN (387 aa).

The active-site Proton acceptor is glutamate 110. Residues 117 to 349 (VGKAGALCVS…NRAGYASPIR (233 aa)) enclose the Radical SAM core domain. A disulfide bond links cysteine 124 and cysteine 360. [4Fe-4S] cluster contacts are provided by cysteine 131, cysteine 135, and cysteine 138. S-adenosyl-L-methionine is bound by residues 186–187 (GE), serine 218, 240–242 (SLH), and asparagine 317. The active-site S-methylcysteine intermediate is the cysteine 360.

The protein belongs to the radical SAM superfamily. RlmN family. [4Fe-4S] cluster is required as a cofactor.

The protein localises to the cytoplasm. The enzyme catalyses adenosine(2503) in 23S rRNA + 2 reduced [2Fe-2S]-[ferredoxin] + 2 S-adenosyl-L-methionine = 2-methyladenosine(2503) in 23S rRNA + 5'-deoxyadenosine + L-methionine + 2 oxidized [2Fe-2S]-[ferredoxin] + S-adenosyl-L-homocysteine. It catalyses the reaction adenosine(37) in tRNA + 2 reduced [2Fe-2S]-[ferredoxin] + 2 S-adenosyl-L-methionine = 2-methyladenosine(37) in tRNA + 5'-deoxyadenosine + L-methionine + 2 oxidized [2Fe-2S]-[ferredoxin] + S-adenosyl-L-homocysteine. In terms of biological role, specifically methylates position 2 of adenine 2503 in 23S rRNA and position 2 of adenine 37 in tRNAs. m2A2503 modification seems to play a crucial role in the proofreading step occurring at the peptidyl transferase center and thus would serve to optimize ribosomal fidelity. This Hyphomonas neptunium (strain ATCC 15444) protein is Dual-specificity RNA methyltransferase RlmN.